Reading from the N-terminus, the 419-residue chain is Phospho-N-acetylmuramoyl-pentapeptide-transferase (419 aa).

A run of 10 helical transmembrane segments spans residues 22-42 (YVSF…TAIG), 72-92 (TPTM…LLCA), 94-114 (LNNI…ALGF), 135-155 (IVGQ…SPDV), 210-230 (AAWL…SNGA), 238-258 (GLAA…AYMS), 266-286 (FLNI…AAFI), 303-323 (FMGD…AIII), 327-347 (LLIP…MLQV), and 396-416 (KIVV…IVTL).

Belongs to the glycosyltransferase 4 family. MraY subfamily. Requires Mg(2+) as cofactor.

It is found in the cell inner membrane. It catalyses the reaction UDP-N-acetyl-alpha-D-muramoyl-L-alanyl-gamma-D-glutamyl-meso-2,6-diaminopimeloyl-D-alanyl-D-alanine + di-trans,octa-cis-undecaprenyl phosphate = di-trans,octa-cis-undecaprenyl diphospho-N-acetyl-alpha-D-muramoyl-L-alanyl-D-glutamyl-meso-2,6-diaminopimeloyl-D-alanyl-D-alanine + UMP. Its pathway is cell wall biogenesis; peptidoglycan biosynthesis. In terms of biological role, catalyzes the initial step of the lipid cycle reactions in the biosynthesis of the cell wall peptidoglycan: transfers peptidoglycan precursor phospho-MurNAc-pentapeptide from UDP-MurNAc-pentapeptide onto the lipid carrier undecaprenyl phosphate, yielding undecaprenyl-pyrophosphoryl-MurNAc-pentapeptide, known as lipid I. The sequence is that of Phospho-N-acetylmuramoyl-pentapeptide-transferase from Parabacteroides distasonis (strain ATCC 8503 / DSM 20701 / CIP 104284 / JCM 5825 / NCTC 11152).